A 427-amino-acid polypeptide reads, in one-letter code: Adenylosuccinate synthetase (427 aa).

GTP contacts are provided by residues 12–18 (GDEGKGK) and 40–42 (GHT). Aspartate 13 serves as the catalytic Proton acceptor. Residues aspartate 13 and glycine 40 each coordinate Mg(2+). IMP contacts are provided by residues 13–16 (DEGK), 38–41 (NAGH), threonine 128, arginine 142, glutamine 223, threonine 238, and arginine 302. Residue histidine 41 is the Proton donor of the active site. Residue 298–304 (TVTGRAR) participates in substrate binding. GTP contacts are provided by residues arginine 304, 330 to 332 (RLD), and 412 to 414 (SVG).

The protein belongs to the adenylosuccinate synthetase family. Homodimer. Mg(2+) is required as a cofactor.

It is found in the cytoplasm. It catalyses the reaction IMP + L-aspartate + GTP = N(6)-(1,2-dicarboxyethyl)-AMP + GDP + phosphate + 2 H(+). Its pathway is purine metabolism; AMP biosynthesis via de novo pathway; AMP from IMP: step 1/2. Functionally, plays an important role in the de novo pathway of purine nucleotide biosynthesis. Catalyzes the first committed step in the biosynthesis of AMP from IMP. In Brachyspira hyodysenteriae (strain ATCC 49526 / WA1), this protein is Adenylosuccinate synthetase.